A 366-amino-acid chain; its full sequence is Spermidine/putrescine import ATP-binding protein PotA (366 aa).

The region spanning 14-247 is the ABC transporter domain; the sequence is ISARALRKVY…PADRFVADFI (234 aa). 49-56 contacts ATP; it reads GPSGCGKT.

This sequence belongs to the ABC transporter superfamily. Spermidine/putrescine importer (TC 3.A.1.11.1) family. As to quaternary structure, the complex is composed of two ATP-binding proteins (PotA), two transmembrane proteins (PotB and PotC) and a solute-binding protein (PotD).

Its subcellular location is the cell inner membrane. The catalysed reaction is ATP + H2O + polyamine-[polyamine-binding protein]Side 1 = ADP + phosphate + polyamineSide 2 + [polyamine-binding protein]Side 1.. Part of the ABC transporter complex PotABCD involved in spermidine/putrescine import. Responsible for energy coupling to the transport system. This Ruegeria pomeroyi (strain ATCC 700808 / DSM 15171 / DSS-3) (Silicibacter pomeroyi) protein is Spermidine/putrescine import ATP-binding protein PotA.